The chain runs to 431 residues: Histidinol dehydrogenase (431 aa).

The NAD(+) site is built by Tyr130, Gln191, and Asn214. Ser237, Gln259, and His262 together coordinate substrate. Zn(2+) contacts are provided by Gln259 and His262. Active-site proton acceptor residues include Glu327 and His328. Positions 328, 361, 415, and 420 each coordinate substrate. Residue Asp361 coordinates Zn(2+). His420 serves as a coordination point for Zn(2+).

Belongs to the histidinol dehydrogenase family. Zn(2+) serves as cofactor.

It catalyses the reaction L-histidinol + 2 NAD(+) + H2O = L-histidine + 2 NADH + 3 H(+). It participates in amino-acid biosynthesis; L-histidine biosynthesis; L-histidine from 5-phospho-alpha-D-ribose 1-diphosphate: step 9/9. Its function is as follows. Catalyzes the sequential NAD-dependent oxidations of L-histidinol to L-histidinaldehyde and then to L-histidine. The polypeptide is Histidinol dehydrogenase (Rhodopseudomonas palustris (strain ATCC BAA-98 / CGA009)).